Consider the following 350-residue polypeptide: MTNLQTFELPTEVTGCAADISLGRALIQAWQKDGIFQIKTDSEQDRKTQEAMAASKQFCKEPLTFKSSCVSDLTYSGYVASGEEVTAGKPDFPEIFTVCKDLSVGDQRVKAGWPCHGPVPWPNNTYQKSMKTFMEELGLAGERLLKLTALGFELPINTFTDLTRDGWHHMRVLRFPPQTSTLSRGIGAHTDYGLLVIAAQDDVGGLYIRPPVEGEKRNRNWLPGESSAGMFEHDEPWTFVTPTPGVWTVFPGDILQFMTGGQLLSTPHKVKLNTRERFACAYFHEPNFEASAYPLFEPSANERIHYGEHFTNMFMRCYPDRITTQSINKENRLAHLEDLKKYSDTRATGS.

Residues 166-286 (GWHHMRVLRF…RFACAYFHEP (121 aa)) form the Fe2OG dioxygenase domain. Residues H189 and H268 each coordinate Fe cation.

Belongs to the iron/ascorbate-dependent oxidoreductase family. Monomer. Fe(2+) serves as cofactor.

It carries out the reaction 2-oxoglutarate + O2 + 2 H(+) = ethene + 3 CO2 + H2O. The enzyme catalyses L-arginine + 2-oxoglutarate + O2 = guanidine + L-glutamate 5-semialdehyde + succinate + CO2. Its pathway is alkene biosynthesis; ethylene biosynthesis via 2-oxoglutarate. In terms of biological role, simultaneously catalyzes two reactions, namely formation of ethylene and of succinate from 2-oxoglutarate. The polypeptide is 2-oxoglutarate-dependent ethylene/succinate-forming enzyme (efe) (Pseudomonas amygdali pv. sesami (Pseudomonas syringae pv. sesami)).